We begin with the raw amino-acid sequence, 336 residues long: Glycerol-3-phosphate dehydrogenase [NAD(P)+] (336 aa).

NADPH contacts are provided by Ser-13, Trp-14, Arg-34, and Lys-108. Sn-glycerol 3-phosphate contacts are provided by Lys-108, Gly-138, and Ser-140. Ala-142 lines the NADPH pocket. Lys-193, Asp-246, Ser-256, Arg-257, and Asn-258 together coordinate sn-glycerol 3-phosphate. The active-site Proton acceptor is the Lys-193. Arg-257 serves as a coordination point for NADPH. The NADPH site is built by Val-281 and Glu-283.

Belongs to the NAD-dependent glycerol-3-phosphate dehydrogenase family.

It localises to the cytoplasm. The enzyme catalyses sn-glycerol 3-phosphate + NAD(+) = dihydroxyacetone phosphate + NADH + H(+). It carries out the reaction sn-glycerol 3-phosphate + NADP(+) = dihydroxyacetone phosphate + NADPH + H(+). It participates in membrane lipid metabolism; glycerophospholipid metabolism. Functionally, catalyzes the reduction of the glycolytic intermediate dihydroxyacetone phosphate (DHAP) to sn-glycerol 3-phosphate (G3P), the key precursor for phospholipid synthesis. This chain is Glycerol-3-phosphate dehydrogenase [NAD(P)+], found in Carboxydothermus hydrogenoformans (strain ATCC BAA-161 / DSM 6008 / Z-2901).